The sequence spans 122 residues: Probable dihydroneopterin aldolase (122 aa).

Residues Glu21, Tyr54, and 73 to 74 (LE) each bind substrate. Lys101 acts as the Proton donor/acceptor in catalysis.

It belongs to the DHNA family.

It carries out the reaction 7,8-dihydroneopterin = 6-hydroxymethyl-7,8-dihydropterin + glycolaldehyde. It functions in the pathway cofactor biosynthesis; tetrahydrofolate biosynthesis; 2-amino-4-hydroxy-6-hydroxymethyl-7,8-dihydropteridine diphosphate from 7,8-dihydroneopterin triphosphate: step 3/4. In terms of biological role, catalyzes the conversion of 7,8-dihydroneopterin to 6-hydroxymethyl-7,8-dihydropterin. The sequence is that of Probable dihydroneopterin aldolase (folB) from Chlamydia muridarum (strain MoPn / Nigg).